The sequence spans 299 residues: Delta-9 desaturase-like 3 protein (299 aa).

Helical transmembrane passes span 38 to 57 and 58 to 76; these read AVGA…TWEA and FRFA…TFSY. The Histidine box-1 signature appears at 77–82; sequence HRNLTH. The Histidine box-2 signature appears at 114 to 118; it reads HRFHH. 2 consecutive transmembrane segments (helical) span residues 174–194 and 198–218; these read IGLH…LPYL and VGVG…ACHI. Residues 246 to 250 carry the Histidine box-3 motif; the sequence is HNNHH. The chain crosses the membrane as a helical span at residues 262-282; sequence WYQVDLTWYLIWFFQVLGLAT.

This sequence belongs to the fatty acid desaturase type 1 family. Requires Fe cation as cofactor.

The protein resides in the endoplasmic reticulum membrane. It participates in lipid metabolism; polyunsaturated fatty acid biosynthesis. This is Delta-9 desaturase-like 3 protein from Arabidopsis thaliana (Mouse-ear cress).